The chain runs to 137 residues: MKQRTLSIIKPDALKKKVVGKIIDRFESNGLEVIAMKRLHLSVKDAENFYAIHRERPFFKDLIEFMVSGPVVVMVLEGKDAVAKNRDLMGATDPKLAQKGTIRADFAESIDANAVHGSDSLENAHNEIAFFFATREF.

6 residues coordinate ATP: lysine 10, phenylalanine 58, arginine 86, threonine 92, arginine 103, and asparagine 113. Catalysis depends on histidine 116, which acts as the Pros-phosphohistidine intermediate.

The protein belongs to the NDK family. Homotetramer. It depends on Mg(2+) as a cofactor.

The protein resides in the cytoplasm. The catalysed reaction is a 2'-deoxyribonucleoside 5'-diphosphate + ATP = a 2'-deoxyribonucleoside 5'-triphosphate + ADP. The enzyme catalyses a ribonucleoside 5'-diphosphate + ATP = a ribonucleoside 5'-triphosphate + ADP. In terms of biological role, major role in the synthesis of nucleoside triphosphates other than ATP. The ATP gamma phosphate is transferred to the NDP beta phosphate via a ping-pong mechanism, using a phosphorylated active-site intermediate. This Helicobacter acinonychis (strain Sheeba) protein is Nucleoside diphosphate kinase.